The chain runs to 535 residues: Dual specificity calcium/calmodulin-dependent 3',5'-cyclic nucleotide phosphodiesterase 1B (535 aa).

The tract at residues 1–21 is disordered; it reads MELSPRSPPEMLESDCPSPLE. Phosphoserine occurs at positions 7 and 14. Calmodulin-binding regions lie at residues 26 to 46 and 117 to 140; these read PSKK…KQLE and EKPK…MFRR. Residues 145–502 enclose the PDEase domain; sequence VGPTYSTAVH…QKWKERAASG (358 aa). The active-site Proton donor is histidine 222. Histidine 226, histidine 262, aspartate 263, and aspartate 369 together coordinate Zn(2+). Aspartate 263 contributes to the Mg(2+) binding site. Disordered regions lie at residues 445-474 and 495-535; these read PLAD…GDPN and WKER…GNLD. Residues 454–463 show a composition bias toward polar residues; the sequence is KSQPSFQWRQ. Phosphoserine occurs at positions 465 and 513.

This sequence belongs to the cyclic nucleotide phosphodiesterase family. PDE1 subfamily. Homodimer. It depends on Zn(2+) as a cofactor. Mg(2+) serves as cofactor.

The protein resides in the cytoplasm. Its subcellular location is the cytosol. The enzyme catalyses a nucleoside 3',5'-cyclic phosphate + H2O = a nucleoside 5'-phosphate + H(+). It catalyses the reaction 3',5'-cyclic GMP + H2O = GMP + H(+). The catalysed reaction is 3',5'-cyclic AMP + H2O = AMP + H(+). Type I PDE are activated by the binding of calmodulin in the presence of Ca(2+). Its function is as follows. Cyclic nucleotide phosphodiesterase with a dual specificity for the second messengers cAMP and cGMP, which are key regulators of many important physiological processes. Has a preference for cGMP as a substrate. This chain is Dual specificity calcium/calmodulin-dependent 3',5'-cyclic nucleotide phosphodiesterase 1B, found in Cricetulus griseus (Chinese hamster).